We begin with the raw amino-acid sequence, 179 residues long: Large ribosomal subunit protein uL5 (179 aa).

Belongs to the universal ribosomal protein uL5 family. In terms of assembly, part of the 50S ribosomal subunit; part of the 5S rRNA/L5/L18/L25 subcomplex. Contacts the 5S rRNA and the P site tRNA. Forms a bridge to the 30S subunit in the 70S ribosome.

Its function is as follows. This is one of the proteins that bind and probably mediate the attachment of the 5S RNA into the large ribosomal subunit, where it forms part of the central protuberance. In the 70S ribosome it contacts protein S13 of the 30S subunit (bridge B1b), connecting the 2 subunits; this bridge is implicated in subunit movement. Contacts the P site tRNA; the 5S rRNA and some of its associated proteins might help stabilize positioning of ribosome-bound tRNAs. This chain is Large ribosomal subunit protein uL5, found in Pseudomonas fluorescens (strain ATCC BAA-477 / NRRL B-23932 / Pf-5).